The following is a 440-amino-acid chain: Adenylyltransferase and sulfurtransferase UBA4 (440 aa).

An N-acetylmethionine modification is found at methionine 1. Residues glycine 77, aspartate 98, 105-109 (SNLHR), lysine 122, and 166-167 (DS) contribute to the ATP site. Residues cysteine 208 and cysteine 211 each coordinate Zn(2+). The active-site Glycyl thioester intermediate; for adenylyltransferase activity is cysteine 225. Cysteine 286 and cysteine 289 together coordinate Zn(2+). Position 326 is a phosphoserine (serine 326). In terms of domain architecture, Rhodanese spans 339 to 438 (FLAKHIFLDV…YIDDIDQTIP (100 aa)). The active-site Cysteine persulfide intermediate; for sulfurtransferase activity is cysteine 397.

In the N-terminal section; belongs to the HesA/MoeB/ThiF family. UBA4 subfamily. The cofactor is Zn(2+).

The protein resides in the cytoplasm. It localises to the cytosol. It participates in tRNA modification; 5-methoxycarbonylmethyl-2-thiouridine-tRNA biosynthesis. Plays a central role in 2-thiolation of mcm(5)S(2)U at tRNA wobble positions of cytosolic tRNA(Lys), tRNA(Glu) and tRNA(Gln). Acts by mediating the C-terminal thiocarboxylation of sulfur carrier URM1. Its N-terminus first activates URM1 as acyl-adenylate (-COAMP), then the persulfide sulfur on the catalytic cysteine is transferred to URM1 to form thiocarboxylation (-COSH) of its C-terminus. The reaction probably involves hydrogen sulfide that is generated from the persulfide intermediate and that acts as a nucleophile towards URM1. Subsequently, a transient disulfide bond is formed. Does not use thiosulfate as sulfur donor; NFS1 probably acting as a sulfur donor for thiocarboxylation reactions. Prior mcm(5) tRNA modification by the elongator complex is required for 2-thiolation. May also be involved in protein urmylation. This Saccharomyces cerevisiae (strain YJM789) (Baker's yeast) protein is Adenylyltransferase and sulfurtransferase UBA4.